The chain runs to 94 residues: MTKSELIESLVEKNHSISVKSVENAVKEILEHMSQALESGDRIEIRGFGSFSLHFRQPRVGRNPKTGAQVKLDAKCVPHFKAGKELRERVDFNA.

It belongs to the bacterial histone-like protein family. In terms of assembly, heterodimer of an alpha and a beta chain.

Its function is as follows. This protein is one of the two subunits of integration host factor, a specific DNA-binding protein that functions in genetic recombination as well as in transcriptional and translational control. This Mannheimia succiniciproducens (strain KCTC 0769BP / MBEL55E) protein is Integration host factor subunit beta.